Consider the following 335-residue polypeptide: Biotin synthase (335 aa).

The Radical SAM core domain maps to 46-274 (YDIQLASLFS…KSKIRLSAGR (229 aa)). [4Fe-4S] cluster-binding residues include Cys-61, Cys-65, and Cys-68. The [2Fe-2S] cluster site is built by Cys-105, Cys-137, Cys-197, and Arg-269.

The protein belongs to the radical SAM superfamily. Biotin synthase family. As to quaternary structure, homodimer. [4Fe-4S] cluster serves as cofactor. Requires [2Fe-2S] cluster as cofactor.

It catalyses the reaction (4R,5S)-dethiobiotin + (sulfur carrier)-SH + 2 reduced [2Fe-2S]-[ferredoxin] + 2 S-adenosyl-L-methionine = (sulfur carrier)-H + biotin + 2 5'-deoxyadenosine + 2 L-methionine + 2 oxidized [2Fe-2S]-[ferredoxin]. It functions in the pathway cofactor biosynthesis; biotin biosynthesis; biotin from 7,8-diaminononanoate: step 2/2. Its function is as follows. Catalyzes the conversion of dethiobiotin (DTB) to biotin by the insertion of a sulfur atom into dethiobiotin via a radical-based mechanism. This is Biotin synthase from Prochlorococcus marinus (strain MIT 9215).